Consider the following 192-residue polypeptide: Phosphoheptose isomerase (192 aa).

Positions 37-192 (LADSFKAGGK…IQLIEKEMVK (156 aa)) constitute an SIS domain. 52 to 54 (NGG) contacts substrate. Positions 61 and 65 each coordinate Zn(2+). Residues E65, 93 to 94 (ND), 119 to 121 (STS), S124, and Q172 each bind substrate. Positions 172 and 180 each coordinate Zn(2+).

The protein belongs to the SIS family. GmhA subfamily. As to quaternary structure, homotetramer. Requires Zn(2+) as cofactor.

It is found in the cytoplasm. It catalyses the reaction 2 D-sedoheptulose 7-phosphate = D-glycero-alpha-D-manno-heptose 7-phosphate + D-glycero-beta-D-manno-heptose 7-phosphate. It functions in the pathway carbohydrate biosynthesis; D-glycero-D-manno-heptose 7-phosphate biosynthesis; D-glycero-alpha-D-manno-heptose 7-phosphate and D-glycero-beta-D-manno-heptose 7-phosphate from sedoheptulose 7-phosphate: step 1/1. Functionally, catalyzes the isomerization of sedoheptulose 7-phosphate in D-glycero-D-manno-heptose 7-phosphate. The sequence is that of Phosphoheptose isomerase from Salmonella agona (strain SL483).